The sequence spans 249 residues: Inhibitor of growth protein 4 (249 aa).

Residues 25-118 (FQLMRDLDQR…ADLKEKQIES (94 aa)) adopt a coiled-coil conformation. The interval 115-160 (QIESSDYDSSSSKGKKKGRAQKEKKAARARSKGKNSDEEAPKTAQK) is disordered. The PHD-type zinc finger occupies 196-245 (PTYCLCHQVSYGEMIGCDNPDCSIEWFHFACVGLTTKPRGKWFCPRCSQE). Positions 199, 201, 212, 217, 223, 226, 239, and 242 each coordinate Zn(2+).

Belongs to the ING family. Homodimer. Component of the HBO1 complex.

It localises to the nucleus. Its function is as follows. Component of HBO1 complexes, which specifically mediate acetylation of histone H3 at 'Lys-14' (H3K14ac), and have reduced activity toward histone H4. Through chromatin acetylation it may function in DNA replication. In Gallus gallus (Chicken), this protein is Inhibitor of growth protein 4 (ING4).